A 790-amino-acid chain; its full sequence is Protein sel-1 homolog 1 (790 aa).

Residues 1–21 (MQVRVRLSLLLLCAVLLGSAA) form the signal peptide. The tract at residues 22–51 (ATSDDKTNQDDSLDSKSSLPTDESVKDHTT) is disordered. Topologically, residues 22–734 (ATSDDKTNQD…LFTQLDMDQL (713 aa)) are lumenal. The segment at 23-733 (TSDDKTNQDD…DLFTQLDMDQ (711 aa)) is interaction with ERLEC1, OS9 and SYVN1. Ser64 is subject to Phosphoserine. The span at 67 to 78 (AEVESLLQDEED) shows a compositional bias: acidic residues. A disordered region spans residues 67 to 98 (AEVESLLQDEEDSSKTQEEEISFLESPNPSSK). The Fibronectin type-II domain maps to 118–166 (AHGEPCHFPFLFLDKEYDECTSDGREDGRLWCATTYDYKTDEKWGFCET). Disulfide bonds link Cys123–Cys149 and Cys137–Cys164. Sel1-like repeat units lie at residues 179 to 214 (AEMIYQAGMKILNGSNRKSQKREAYRYLQKAAGMNH), 215 to 250 (TKALERVSYALLFGDYLTQNIQAAKEMFEKLTEEGS), 251 to 286 (PKGQTGLGFLYASGLGVNSSQAKALVYYTFGALGGN), 287 to 322 (LIAHMILGYRYWAGIGVLQSCESALTHYRLVANHVA), 369 to 405 (VQAQVGLGQLHLHGGRGVEQNHQRAFDYFNLAANAGN), 406 to 442 (SHAMAFLGKMYSEGSDIVPQSNETALHYFKKAADMGN), 443 to 478 (PVGQSGLGMAYLYGRGVQVNYDLALKYFQKAAEQGW), 479 to 514 (VDGQLQLGSMYYNGIGVKRDYKQALKYFNLASQGGH), and 515 to 550 (ILAFYNLAQMHASGTGVMRSCHTAVELFKNVCERGR). N-linked (GlcNAc...) asparagine glycosylation is found at Asn191 and Asn213. N-linked (GlcNAc...) asparagine glycosylation occurs at Asn268. The tract at residues 348-533 (NSGMLEEDLI…MHASGTGVMR (186 aa)) is important for homodimerization and oligomerization. The N-linked (GlcNAc...) asparagine glycan is linked to Asn427. Asn604 carries an N-linked (GlcNAc...) asparagine glycan. Sel1-like repeat units follow at residues 623 to 658 (TVARIKLGDYHFYGFGTDVDYETAFIHYRLASEQQH) and 660 to 695 (AQAMFNLGYMHEKGLGIKQDIHLAKRFYDMAAEASP). The segment at 639–719 (TDVDYETAFI…VVYFLQYIRE (81 aa)) is interaction with SYVN1. Residues 734-790 (LLGPEWDLYLMTIIALLLGTVIAYRQRQHQDIPVPRPPGPRPAPPQQEGPPEQQPPQ) form a mediates retention in the endoplasmic reticulum region. The helical transmembrane segment at 735 to 755 (LGPEWDLYLMTIIALLLGTVI) threads the bilayer. Residues 756-790 (AYRQRQHQDIPVPRPPGPRPAPPQQEGPPEQQPPQ) lie on the Cytoplasmic side of the membrane. Residues 763–790 (QDIPVPRPPGPRPAPPQQEGPPEQQPPQ) form a disordered region. The segment covering 767–790 (VPRPPGPRPAPPQQEGPPEQQPPQ) has biased composition (pro residues).

This sequence belongs to the sel-1 family. As to quaternary structure, homodimer and homooligomer. May form a complex with ERLEC1, HSPA5, OS9, and SYVN1. Interacts with FOXRED2 and EDEM1. Interacts with LPL and LMF1; may stabilize the complex formed by LPL and LMF1 and thereby promote the export of LPL dimers. Component of the HRD1 complex, which comprises at least SYNV1/HRD1, DERL1/2, FAM8A1, HERPUD1/HERP, OS9, SEL1L and UBE2J1. SYNV1 assembles with SEL1L and FAM8A1 through its transmembrane domains, but interaction with its cytoplasmic domain is required to confer stability to FAM8A1 and enhance recruitment of HERPUD1. The interaction with SYNV1/HRD1 is direct. N-glycosylated. Highly expressed in pancreas, white adipose tissue, liver and spleen (at protein level). Detected in heart, brain, spleen, lung, liver, kidney and testis.

It is found in the endoplasmic reticulum membrane. In terms of biological role, plays a role in the endoplasmic reticulum quality control (ERQC) system also called ER-associated degradation (ERAD) involved in ubiquitin-dependent degradation of misfolded endoplasmic reticulum proteins. Enhances SYVN1 stability. Plays a role in LPL maturation and secretion. Required for normal differentiation of the pancreas epithelium, and for normal exocrine function and survival of pancreatic cells. May play a role in Notch signaling. The chain is Protein sel-1 homolog 1 (Sel1l) from Mus musculus (Mouse).